Consider the following 482-residue polypeptide: G patch domain-containing protein 2-like (482 aa).

A phosphoserine mark is found at Ser-31, Ser-86, and Ser-88. Thr-91 bears the Phosphothreonine mark. Residue Lys-196 forms a Glycyl lysine isopeptide (Lys-Gly) (interchain with G-Cter in SUMO2) linkage. Basic and acidic residues predominate over residues 198–214 (GRKERMECETDEQKQGS). Disordered stretches follow at residues 198–247 (GRKE…DDEQ) and 413–482 (KRKR…PGYS). Residues 220-230 (ECETSSVCSSS) are compositionally biased toward low complexity. Polar residues predominate over residues 439 to 450 (TPASQAPKSPSS). Residues Ser-447 and Ser-449 each carry the phosphoserine modification. Low complexity predominate over residues 456 to 469 (TSAAEKATDATTAT).

This Homo sapiens (Human) protein is G patch domain-containing protein 2-like (GPATCH2L).